The chain runs to 495 residues: AAA-ATPase At2g18193 (495 aa).

The helical transmembrane segment at 7 to 28 (FSFSPSSLFSAYASLTGFLMLF) threads the bilayer. An ATP-binding site is contributed by 250–257 (GPPGTGKS). The segment at 451–495 (EVSICKATDDDEKQNGSLGCVKKKKKGGKQKGKGKGKGKAKTYLI) is disordered. The span at 471–495 (VKKKKKGGKQKGKGKGKGKAKTYLI) shows a compositional bias: basic residues.

Belongs to the AAA ATPase family. BCS1 subfamily. Requires Mg(2+) as cofactor.

It localises to the membrane. The enzyme catalyses ATP + H2O = ADP + phosphate + H(+). In Arabidopsis thaliana (Mouse-ear cress), this protein is AAA-ATPase At2g18193.